The following is a 210-amino-acid chain: ATP phosphoribosyltransferase (210 aa).

The protein belongs to the ATP phosphoribosyltransferase family. Short subfamily. In terms of assembly, heteromultimer composed of HisG and HisZ subunits.

It localises to the cytoplasm. It carries out the reaction 1-(5-phospho-beta-D-ribosyl)-ATP + diphosphate = 5-phospho-alpha-D-ribose 1-diphosphate + ATP. Its pathway is amino-acid biosynthesis; L-histidine biosynthesis; L-histidine from 5-phospho-alpha-D-ribose 1-diphosphate: step 1/9. In terms of biological role, catalyzes the condensation of ATP and 5-phosphoribose 1-diphosphate to form N'-(5'-phosphoribosyl)-ATP (PR-ATP). Has a crucial role in the pathway because the rate of histidine biosynthesis seems to be controlled primarily by regulation of HisG enzymatic activity. The polypeptide is ATP phosphoribosyltransferase (Caldanaerobacter subterraneus subsp. tengcongensis (strain DSM 15242 / JCM 11007 / NBRC 100824 / MB4) (Thermoanaerobacter tengcongensis)).